A 317-amino-acid chain; its full sequence is tRNA dimethylallyltransferase (317 aa).

Position 14 to 21 (14 to 21 (GPTASGKS)) interacts with ATP. Substrate is bound at residue 16-21 (TASGKS). Interaction with substrate tRNA regions lie at residues 39–42 (DSVL) and 163–167 (QRIQR).

Belongs to the IPP transferase family. Monomer. It depends on Mg(2+) as a cofactor.

It carries out the reaction adenosine(37) in tRNA + dimethylallyl diphosphate = N(6)-dimethylallyladenosine(37) in tRNA + diphosphate. Catalyzes the transfer of a dimethylallyl group onto the adenine at position 37 in tRNAs that read codons beginning with uridine, leading to the formation of N6-(dimethylallyl)adenosine (i(6)A). This chain is tRNA dimethylallyltransferase, found in Xylella fastidiosa (strain M23).